Here is an 88-residue protein sequence, read N- to C-terminus: EMBRYO SURROUNDING FACTOR 1-like protein 3 (88 aa).

Positions 1–22 (MKLSQIALICIVIASLFAMHEC) are cleaved as a signal peptide. 3 disulfide bridges follow: cysteine 41–cysteine 56, cysteine 54–cysteine 80, and cysteine 57–cysteine 67.

It belongs to the MEG family. As to expression, expressed in stems, leaves and flowers.

The chain is EMBRYO SURROUNDING FACTOR 1-like protein 3 (ESFL3) from Arabidopsis thaliana (Mouse-ear cress).